Here is a 140-residue protein sequence, read N- to C-terminus: Oocyte-expressed protein homolog (140 aa).

A KH; atypical domain is found at 40-101 (PLVFFLEAWL…AVQRQVKSVL (62 aa)).

It belongs to the KHDC1 family. In terms of assembly, component of the subcortical maternal complex (SCMC), at least composed of NLRP5, KHDC3, OOEP, and TLE6. Within the complex, interacts with NLRP5, KHDC3 and TLE6. As part of the SCMC interacts with the SCMC-associated protein NLRP4F. The SCMC may facilitate translocation of its components between the nuclear and cytoplasmic compartments. Forms a scaffold complex with KHDC3/FILIA, and interacts with BLM and TRIM25 at DNA replication forks.

It localises to the cytoplasm. The protein localises to the nucleus. Its function is as follows. Component of the subcortical maternal complex (SCMC), a multiprotein complex that plays a key role in early embryonic development. The SCMC complex is a structural constituent of cytoplasmic lattices, which consist in fibrous structures found in the cytoplasm of oocytes and preimplantation embryos. They are required to store maternal proteins critical for embryonic development, such as proteins that control epigenetic reprogramming of the preimplantation embryo, and prevent their degradation or activation. As part of the OOEP-KHDC3 scaffold, recruits BLM and TRIM25 to DNA replication forks, thereby promoting the ubiquitination of BLM by TRIM25, enhancing BLM retainment at replication forks and therefore promoting stalled replication fork restart. Positively regulates the homologous recombination-mediated DNA double-strand break (DSB) repair pathway by regulating ATM activation and RAD51 recruitment to DSBs in oocytes. Thereby contributes to oocyte survival and the resumption and completion of meiosis. The chain is Oocyte-expressed protein homolog (OOEP) from Bos taurus (Bovine).